A 386-amino-acid polypeptide reads, in one-letter code: ABC transporter permease protein NatB (386 aa).

6 helical membrane passes run threonine 19–glutamate 39, alanine 172–methionine 192, tryptophan 226–leucine 246, alanine 273–methionine 293, alanine 300–serine 320, and alanine 353–alanine 373.

The complex is composed of NatA and NatB.

Its subcellular location is the cell membrane. It catalyses the reaction Na(+)(in) + ATP + H2O = Na(+)(out) + ADP + phosphate + H(+). Part of an ABC transporter that catalyzes ATP-dependent electrogenic sodium extrusion. The chain is ABC transporter permease protein NatB from Bacillus subtilis (strain 168).